A 388-amino-acid polypeptide reads, in one-letter code: 3-dehydroquinate synthase (388 aa).

Residues 85–90 (DGEQYK), 119–123 (GVIGD), 143–144 (TT), K156, K165, and 183–186 (TLKT) each bind NAD(+). Positions 198, 261, and 278 each coordinate Zn(2+).

It belongs to the sugar phosphate cyclases superfamily. Dehydroquinate synthase family. The cofactor is Co(2+). It depends on Zn(2+) as a cofactor. Requires NAD(+) as cofactor.

The protein localises to the cytoplasm. It carries out the reaction 7-phospho-2-dehydro-3-deoxy-D-arabino-heptonate = 3-dehydroquinate + phosphate. It functions in the pathway metabolic intermediate biosynthesis; chorismate biosynthesis; chorismate from D-erythrose 4-phosphate and phosphoenolpyruvate: step 2/7. Its function is as follows. Catalyzes the conversion of 3-deoxy-D-arabino-heptulosonate 7-phosphate (DAHP) to dehydroquinate (DHQ). The polypeptide is 3-dehydroquinate synthase (Psychrobacter arcticus (strain DSM 17307 / VKM B-2377 / 273-4)).